The chain runs to 691 residues: ATP-dependent RNA helicase MRH4, mitochondrial (691 aa).

Residues 1–31 (MLIGQVSRLSAIPPLALQHTLRPLHSSSVLA) constitute a mitochondrion transit peptide. The segment at 31-148 (AAGGKRPKQS…ATMPPNLTPR (118 aa)) is disordered. A compositionally biased stretch (polar residues) spans 39–49 (QSPSHSRNSPR). The segment covering 50–68 (QKPDWEKRGSNRGRSEQPR) has biased composition (basic and acidic residues). Positions 94-103 (SDSSSGSSAS) are enriched in low complexity. The span at 111-126 (VPTSSRRLLPFSSSDT) shows a compositional bias: polar residues. The short motif at 183 to 213 (RTFDDFGLEEGLVKSLKGLYGEDGKTTPIET) is the Q motif element. Residues 225–433 (ASAPIGSQRV…TTNPFFTKKE (209 aa)) form the Helicase ATP-binding domain. 238–245 (AETGSGKT) is a binding site for ATP. A DEAD box motif is present at residues 382 to 385 (DEAD). The Helicase C-terminal domain occupies 474–691 (TLAEDAKAAK…VGAMGKRVRT (218 aa)). Positions 644–667 (LGEGAKNNKGGKGQGPLKKDGKTA) are disordered.

Belongs to the DEAD box helicase family. MRH4 subfamily.

It is found in the mitochondrion. The enzyme catalyses ATP + H2O = ADP + phosphate + H(+). Functionally, ATP-binding RNA helicase involved in mitochondrial RNA metabolism. Required for maintenance of mitochondrial DNA. This chain is ATP-dependent RNA helicase MRH4, mitochondrial (MRH4), found in Cryptococcus neoformans var. neoformans serotype D (strain JEC21 / ATCC MYA-565) (Filobasidiella neoformans).